A 451-amino-acid polypeptide reads, in one-letter code: Trigger factor (451 aa).

In terms of domain architecture, PPIase FKBP-type spans Gly-163–Pro-248.

This sequence belongs to the FKBP-type PPIase family. Tig subfamily.

The protein resides in the cytoplasm. The catalysed reaction is [protein]-peptidylproline (omega=180) = [protein]-peptidylproline (omega=0). Its function is as follows. Involved in protein export. Acts as a chaperone by maintaining the newly synthesized protein in an open conformation. Functions as a peptidyl-prolyl cis-trans isomerase. In Leptospira interrogans serogroup Icterohaemorrhagiae serovar copenhageni (strain Fiocruz L1-130), this protein is Trigger factor.